A 119-amino-acid polypeptide reads, in one-letter code: Ribonuclease P protein component (119 aa).

This sequence belongs to the RnpA family. Consists of a catalytic RNA component (M1 or rnpB) and a protein subunit.

It catalyses the reaction Endonucleolytic cleavage of RNA, removing 5'-extranucleotides from tRNA precursor.. RNaseP catalyzes the removal of the 5'-leader sequence from pre-tRNA to produce the mature 5'-terminus. It can also cleave other RNA substrates such as 4.5S RNA. The protein component plays an auxiliary but essential role in vivo by binding to the 5'-leader sequence and broadening the substrate specificity of the ribozyme. The chain is Ribonuclease P protein component from Mycobacterium avium (strain 104).